The chain runs to 135 residues: Large-conductance mechanosensitive channel (135 aa).

2 consecutive transmembrane segments (helical) span residues 9 to 29 and 79 to 99; these read AFAA…GAAF and IQTI…LKAI.

It belongs to the MscL family. As to quaternary structure, homopentamer.

The protein localises to the cell inner membrane. In terms of biological role, channel that opens in response to stretch forces in the membrane lipid bilayer. May participate in the regulation of osmotic pressure changes within the cell. This Aeromonas salmonicida (strain A449) protein is Large-conductance mechanosensitive channel.